We begin with the raw amino-acid sequence, 495 residues long: NADH-ubiquinone oxidoreductase chain 4 (495 aa).

A run of 14 helical transmembrane segments spans residues 9–29 (YSNL…ILVI), 37–57 (IRGI…FFWI), 89–109 (ISLF…LVGF), 118–138 (EYMI…CSLD), 139–159 (LLIF…IIGV), 173–193 (FFLY…FIFF), 214–234 (ILLW…VPVH), 245–265 (PTAG…YGFL), 272–292 (FPEA…IAII), 307–327 (IIAY…FSLN), 335–355 (ILLM…VGAL), 367–387 (YGGL…FTLA), 413–433 (LVAT…LWLY), and 457–477 (VLIF…PEVF).

The protein belongs to the complex I subunit 4 family.

The protein resides in the mitochondrion membrane. It carries out the reaction a ubiquinone + NADH + 5 H(+)(in) = a ubiquinol + NAD(+) + 4 H(+)(out). Functionally, core subunit of the mitochondrial membrane respiratory chain NADH dehydrogenase (Complex I) that is believed to belong to the minimal assembly required for catalysis. Complex I functions in the transfer of electrons from NADH to the respiratory chain. The immediate electron acceptor for the enzyme is believed to be ubiquinone. This chain is NADH-ubiquinone oxidoreductase chain 4 (ND4), found in Marchantia polymorpha (Common liverwort).